Consider the following 291-residue polypeptide: Small ribosomal subunit biogenesis GTPase RsgA 1 (291 aa).

The CP-type G domain maps to 63–221 (ENALVRPPVA…VADTPGFSSI (159 aa)). Residues 112–115 (SKMD) and 164–172 (GQSGVGKST) contribute to the GTP site. Zn(2+) contacts are provided by Cys245, Cys250, His252, and Cys258.

The protein belongs to the TRAFAC class YlqF/YawG GTPase family. RsgA subfamily. Monomer. Associates with 30S ribosomal subunit, binds 16S rRNA. Requires Zn(2+) as cofactor.

Its subcellular location is the cytoplasm. In terms of biological role, one of several proteins that assist in the late maturation steps of the functional core of the 30S ribosomal subunit. Helps release RbfA from mature subunits. May play a role in the assembly of ribosomal proteins into the subunit. Circularly permuted GTPase that catalyzes slow GTP hydrolysis, GTPase activity is stimulated by the 30S ribosomal subunit. The polypeptide is Small ribosomal subunit biogenesis GTPase RsgA 1 (Listeria monocytogenes serotype 4b (strain F2365)).